The chain runs to 241 residues: Attacin-C (241 aa).

Residues 1 to 21 (MSKIVLLIVVIVGVLGSLAVA) form the signal peptide. A propeptide spanning residues 22–23 (LP) is cleaved from the precursor. Residue glutamine 24 is modified to Pyrrolidone carboxylic acid. O-linked (GalNAc...) threonine glycosylation is present at threonine 39. Phosphoserine is present on serine 127.

Belongs to the attacin/sarcotoxin-2 family. In terms of tissue distribution, hemolymph (at protein level).

The protein localises to the secreted. In terms of biological role, has antimicrobial activity in synergy with other peptides. Strongest activity observed against E.cloacae. In Drosophila melanogaster (Fruit fly), this protein is Attacin-C.